The following is a 347-amino-acid chain: D-alanine--D-alanine ligase (347 aa).

An ATP-grasp domain is found at 131 to 333; that stretch reads KRVLESAGIA…YPELIERLVD (203 aa). 161–216 is an ATP binding site; it reads EEKLAYPVFTKPSNMGSSVGISKSENQEELRQALKLAFRYDSRVLVEQGVNAREIE. Mg(2+) contacts are provided by aspartate 287, glutamate 300, and asparagine 302.

It belongs to the D-alanine--D-alanine ligase family. It depends on Mg(2+) as a cofactor. The cofactor is Mn(2+).

It localises to the cytoplasm. It carries out the reaction 2 D-alanine + ATP = D-alanyl-D-alanine + ADP + phosphate + H(+). Its pathway is cell wall biogenesis; peptidoglycan biosynthesis. Its function is as follows. Cell wall formation. The sequence is that of D-alanine--D-alanine ligase from Streptococcus pneumoniae serotype 19F (strain G54).